A 711-amino-acid chain; its full sequence is F-box only protein 34 (711 aa).

Disordered stretches follow at residues 1 to 36 (MHLK…VNDE), 249 to 271 (SESY…EVGE), 337 to 372 (DTQV…ASQD), and 494 to 529 (YSQL…GSAE). Residues 10–23 (QKKEHPPEVSRETQ) show a composition bias toward basic and acidic residues. Residues 354 to 364 (RADRCSPKEDQ) are compositionally biased toward basic and acidic residues. Residues 572–624 (QQYMAFLPHHIMVKIFRLLPTKSLVALKCTCCYFKFIIEYYNIRPADSRWVRD) form the F-box domain.

Directly interacts with SKP1 and CUL1.

In terms of biological role, substrate-recognition component of the SCF (SKP1-CUL1-F-box protein)-type E3 ubiquitin ligase complex. The polypeptide is F-box only protein 34 (FBXO34) (Homo sapiens (Human)).